Here is a 653-residue protein sequence, read N- to C-terminus: Protease 1 (653 aa).

A signal peptide (or 27) is located at residues 1 to 20 (MKRICGSLLLLGLSISAALA). A propeptide spanning residues 21 to 205 (APASRPAAFD…RRLAAASGEK (185 aa)) is cleaved from the precursor. Intrachain disulfides connect cysteine 211–cysteine 421, cysteine 217–cysteine 285, and cysteine 241–cysteine 263. Catalysis depends on charge relay system residues histidine 262, aspartate 318, and serine 399. A PKD domain is found at 474–553 (NTPPVANFTS…TNTKTGSVTV (80 aa)). A propeptide spans 474–653 (NTPPVANFTS…AAQRAPGSCG (180 aa)) (thr/Ser-rich). In terms of domain architecture, P/Homo B spans 555-653 (GGPGAQTYTN…AAQRAPGSCG (99 aa)).

The protein belongs to the peptidase S1 family. Three disulfide bonds are present.

It localises to the secreted. It carries out the reaction Preferential cleavage: Lys-|-Xaa, including Lys-|-Pro.. The sequence is that of Protease 1 from Achromobacter lyticus.